A 114-amino-acid chain; its full sequence is Ribonuclease P protein component (114 aa).

This sequence belongs to the RnpA family. In terms of assembly, consists of a catalytic RNA component (M1 or rnpB) and a protein subunit.

The catalysed reaction is Endonucleolytic cleavage of RNA, removing 5'-extranucleotides from tRNA precursor.. Its function is as follows. RNaseP catalyzes the removal of the 5'-leader sequence from pre-tRNA to produce the mature 5'-terminus. It can also cleave other RNA substrates such as 4.5S RNA. The protein component plays an auxiliary but essential role in vivo by binding to the 5'-leader sequence and broadening the substrate specificity of the ribozyme. This Borrelia duttonii (strain Ly) protein is Ribonuclease P protein component.